The chain runs to 367 residues: Aspartate-semialdehyde dehydrogenase (367 aa).

NADP(+)-binding positions include R10 to V13, T37 to S38, and Q73. R102 lines the phosphate pocket. The active-site Acyl-thioester intermediate is C135. An S-cysteinyl cysteine; in inhibited form modification is found at C135. Q162 is a binding site for substrate. Residues S165–A169, R173, and P193 each bind NADP(+). Residue E241 participates in substrate binding. K244 lines the phosphate pocket. R267 contributes to the substrate binding site. H274 functions as the Proton acceptor in the catalytic mechanism. Q350 provides a ligand contact to NADP(+).

This sequence belongs to the aspartate-semialdehyde dehydrogenase family. In terms of assembly, homodimer.

It catalyses the reaction L-aspartate 4-semialdehyde + phosphate + NADP(+) = 4-phospho-L-aspartate + NADPH + H(+). The protein operates within amino-acid biosynthesis; L-lysine biosynthesis via DAP pathway; (S)-tetrahydrodipicolinate from L-aspartate: step 2/4. Its pathway is amino-acid biosynthesis; L-methionine biosynthesis via de novo pathway; L-homoserine from L-aspartate: step 2/3. It functions in the pathway amino-acid biosynthesis; L-threonine biosynthesis; L-threonine from L-aspartate: step 2/5. Is inhibited by L- and D-cystine, and by other cystine derivatives, via the formation of a covalently bound cysteine at the active site Cys-135. Functionally, catalyzes the NADPH-dependent formation of L-aspartate-semialdehyde (L-ASA) by the reductive dephosphorylation of L-aspartyl-4-phosphate. The polypeptide is Aspartate-semialdehyde dehydrogenase (Escherichia coli (strain K12)).